We begin with the raw amino-acid sequence, 428 residues long: Serine--tRNA ligase (428 aa).

233 to 235 (TAE) serves as a coordination point for L-serine. ATP is bound at residue 264–266 (RRE). Glutamate 287 is an L-serine binding site. Residue 351–354 (EVSS) coordinates ATP. Residue serine 387 coordinates L-serine.

This sequence belongs to the class-II aminoacyl-tRNA synthetase family. Type-1 seryl-tRNA synthetase subfamily. In terms of assembly, homodimer. The tRNA molecule binds across the dimer.

It is found in the cytoplasm. The enzyme catalyses tRNA(Ser) + L-serine + ATP = L-seryl-tRNA(Ser) + AMP + diphosphate + H(+). The catalysed reaction is tRNA(Sec) + L-serine + ATP = L-seryl-tRNA(Sec) + AMP + diphosphate + H(+). It participates in aminoacyl-tRNA biosynthesis; selenocysteinyl-tRNA(Sec) biosynthesis; L-seryl-tRNA(Sec) from L-serine and tRNA(Sec): step 1/1. Functionally, catalyzes the attachment of serine to tRNA(Ser). Is also able to aminoacylate tRNA(Sec) with serine, to form the misacylated tRNA L-seryl-tRNA(Sec), which will be further converted into selenocysteinyl-tRNA(Sec). This chain is Serine--tRNA ligase, found in Salinibacter ruber (strain DSM 13855 / M31).